We begin with the raw amino-acid sequence, 129 residues long: Small ribosomal subunit protein uS11 (129 aa).

The protein belongs to the universal ribosomal protein uS11 family. In terms of assembly, part of the 30S ribosomal subunit. Interacts with proteins S7 and S18. Binds to IF-3.

Its function is as follows. Located on the platform of the 30S subunit, it bridges several disparate RNA helices of the 16S rRNA. Forms part of the Shine-Dalgarno cleft in the 70S ribosome. The chain is Small ribosomal subunit protein uS11 from Oceanobacillus iheyensis (strain DSM 14371 / CIP 107618 / JCM 11309 / KCTC 3954 / HTE831).